A 358-amino-acid polypeptide reads, in one-letter code: 3-dehydroquinate synthase (358 aa).

Residues 69–74 (DGEQYK), 103–107 (GVIGD), 127–128 (TT), Lys140, Lys149, and 167–170 (TLNT) each bind NAD(+). Zn(2+) is bound by residues Glu182, His245, and His262.

It belongs to the sugar phosphate cyclases superfamily. Dehydroquinate synthase family. Co(2+) is required as a cofactor. Requires Zn(2+) as cofactor. NAD(+) serves as cofactor.

The protein localises to the cytoplasm. The catalysed reaction is 7-phospho-2-dehydro-3-deoxy-D-arabino-heptonate = 3-dehydroquinate + phosphate. It functions in the pathway metabolic intermediate biosynthesis; chorismate biosynthesis; chorismate from D-erythrose 4-phosphate and phosphoenolpyruvate: step 2/7. Functionally, catalyzes the conversion of 3-deoxy-D-arabino-heptulosonate 7-phosphate (DAHP) to dehydroquinate (DHQ). The protein is 3-dehydroquinate synthase of Hydrogenovibrio crunogenus (strain DSM 25203 / XCL-2) (Thiomicrospira crunogena).